A 145-amino-acid polypeptide reads, in one-letter code: Antiholin-like protein LrgA (145 aa).

4 helical membrane-spanning segments follow: residues 10–30 (PAHF…SKII), 33–53 (FMPI…VLLC), 72–92 (NIGL…GVIS), and 96–116 (FLII…TGYV).

It belongs to the CidA/LrgA family. LrgA subfamily.

The protein localises to the cell membrane. Functionally, inhibits the expression or activity of extracellular murein hydrolases by interacting, possibly with LrgB, with the holin-like proteins CidA and/or CidB. The LrgAB and CidAB proteins may affect the proton motive force of the membrane. May be involved in programmed cell death (PCD), possibly triggering PCD in response to antibiotics and environmental stresses. In Staphylococcus aureus (strain Mu3 / ATCC 700698), this protein is Antiholin-like protein LrgA.